The following is a 94-amino-acid chain: Small ribosomal subunit protein bS18c (94 aa).

This sequence belongs to the bacterial ribosomal protein bS18 family. As to quaternary structure, part of the 30S ribosomal subunit.

It is found in the plastid. Its subcellular location is the chloroplast. The chain is Small ribosomal subunit protein bS18c from Manihot esculenta (Cassava).